The chain runs to 351 residues: Holliday junction branch migration complex subunit RuvB (351 aa).

A large ATPase domain (RuvB-L) region spans residues 1-182 (MNDRLITPDA…FGIVQRLEYY (182 aa)). Residues Ile-21, Arg-22, Gly-63, Lys-66, Thr-67, Thr-68, 129-131 (EDF), Arg-172, Tyr-182, and Arg-219 each bind ATP. Mg(2+) is bound at residue Thr-67. The tract at residues 183–253 (NVADLSGIVK…VAHAAMELLN (71 aa)) is small ATPAse domain (RuvB-S). The head domain (RuvB-H) stretch occupies residues 256–351 (RNGFDEQDRR…QDAPPVGRER (96 aa)). DNA is bound by residues Arg-292, Arg-311, and Arg-316. Positions 328–351 (LNPPRQPDTSPDLFQDAPPVGRER) are disordered.

This sequence belongs to the RuvB family. In terms of assembly, homohexamer. Forms an RuvA(8)-RuvB(12)-Holliday junction (HJ) complex. HJ DNA is sandwiched between 2 RuvA tetramers; dsDNA enters through RuvA and exits via RuvB. An RuvB hexamer assembles on each DNA strand where it exits the tetramer. Each RuvB hexamer is contacted by two RuvA subunits (via domain III) on 2 adjacent RuvB subunits; this complex drives branch migration. In the full resolvosome a probable DNA-RuvA(4)-RuvB(12)-RuvC(2) complex forms which resolves the HJ.

The protein resides in the cytoplasm. It catalyses the reaction ATP + H2O = ADP + phosphate + H(+). The RuvA-RuvB-RuvC complex processes Holliday junction (HJ) DNA during genetic recombination and DNA repair, while the RuvA-RuvB complex plays an important role in the rescue of blocked DNA replication forks via replication fork reversal (RFR). RuvA specifically binds to HJ cruciform DNA, conferring on it an open structure. The RuvB hexamer acts as an ATP-dependent pump, pulling dsDNA into and through the RuvAB complex. RuvB forms 2 homohexamers on either side of HJ DNA bound by 1 or 2 RuvA tetramers; 4 subunits per hexamer contact DNA at a time. Coordinated motions by a converter formed by DNA-disengaged RuvB subunits stimulates ATP hydrolysis and nucleotide exchange. Immobilization of the converter enables RuvB to convert the ATP-contained energy into a lever motion, pulling 2 nucleotides of DNA out of the RuvA tetramer per ATP hydrolyzed, thus driving DNA branch migration. The RuvB motors rotate together with the DNA substrate, which together with the progressing nucleotide cycle form the mechanistic basis for DNA recombination by continuous HJ branch migration. Branch migration allows RuvC to scan DNA until it finds its consensus sequence, where it cleaves and resolves cruciform DNA. In Alkalilimnicola ehrlichii (strain ATCC BAA-1101 / DSM 17681 / MLHE-1), this protein is Holliday junction branch migration complex subunit RuvB.